We begin with the raw amino-acid sequence, 380 residues long: Cobalt-precorrin-5B C(1)-methyltransferase (380 aa).

Belongs to the CbiD family.

The catalysed reaction is Co-precorrin-5B + S-adenosyl-L-methionine = Co-precorrin-6A + S-adenosyl-L-homocysteine. The protein operates within cofactor biosynthesis; adenosylcobalamin biosynthesis; cob(II)yrinate a,c-diamide from sirohydrochlorin (anaerobic route): step 6/10. Functionally, catalyzes the methylation of C-1 in cobalt-precorrin-5B to form cobalt-precorrin-6A. This is Cobalt-precorrin-5B C(1)-methyltransferase from Salinispora arenicola (strain CNS-205).